Reading from the N-terminus, the 359-residue chain is Nicotinate-nucleotide--dimethylbenzimidazole phosphoribosyltransferase (359 aa).

The Proton acceptor role is filled by Glu318.

It belongs to the CobT family. In terms of assembly, homodimer.

The catalysed reaction is 5,6-dimethylbenzimidazole + nicotinate beta-D-ribonucleotide = alpha-ribazole 5'-phosphate + nicotinate + H(+). The protein operates within nucleoside biosynthesis; alpha-ribazole biosynthesis; alpha-ribazole from 5,6-dimethylbenzimidazole: step 1/2. Catalyzes the synthesis of alpha-ribazole-5'-phosphate from nicotinate mononucleotide (NAMN) and 5,6-dimethylbenzimidazole (DMB). The protein is Nicotinate-nucleotide--dimethylbenzimidazole phosphoribosyltransferase of Shigella flexneri serotype 5b (strain 8401).